Reading from the N-terminus, the 124-residue chain is UPF0102 protein Rcas_2007 (124 aa).

Belongs to the UPF0102 family.

The polypeptide is UPF0102 protein Rcas_2007 (Roseiflexus castenholzii (strain DSM 13941 / HLO8)).